Here is a 436-residue protein sequence, read N- to C-terminus: Trigger factor (436 aa).

Positions 163–248 (GDRVVLDFAG…VKEVAEGVLP (86 aa)) constitute a PPIase FKBP-type domain.

It belongs to the FKBP-type PPIase family. Tig subfamily.

Its subcellular location is the cytoplasm. The catalysed reaction is [protein]-peptidylproline (omega=180) = [protein]-peptidylproline (omega=0). Its function is as follows. Involved in protein export. Acts as a chaperone by maintaining the newly synthesized protein in an open conformation. Functions as a peptidyl-prolyl cis-trans isomerase. This chain is Trigger factor, found in Bordetella pertussis (strain Tohama I / ATCC BAA-589 / NCTC 13251).